Consider the following 180-residue polypeptide: Regulator of G-protein signaling 8 (180 aa).

Ser-26 bears the Phosphoserine mark. The 116-residue stretch at 56 to 171 (SFDVLLSHKY…FLRSKMYLDL (116 aa)) folds into the RGS domain.

As to quaternary structure, interacts with GNAO1 and GNAI3. In terms of tissue distribution, expressed at high levels in brain. Very little expression detected in other tissues. Detected in Purkinje cells in the cerebellum.

The protein resides in the cell membrane. Its subcellular location is the membrane. The protein localises to the perikaryon. It localises to the cell projection. It is found in the dendrite. The protein resides in the nucleus. In terms of biological role, regulates G protein-coupled receptor signaling cascades, including signaling via muscarinic acetylcholine receptor CHRM2 and dopamine receptor DRD2. Inhibits signal transduction by increasing the GTPase activity of G protein alpha subunits, thereby driving them into their inactive GDP-bound form. Modulates the activity of potassium channels that are activated in response to DRD2 and CHRM2 signaling. The protein is Regulator of G-protein signaling 8 (Rgs8) of Rattus norvegicus (Rat).